Reading from the N-terminus, the 328-residue chain is Cell division protein ZipA (328 aa).

Over 1–4 (MDLN) the chain is Periplasmic. Residues 5-25 (TILIIVGIVALVALIVHGLWS) traverse the membrane as a helical segment. Residues 26–328 (NRREKSKYFD…NAEQAYLARV (303 aa)) are Cytoplasmic-facing. The tract at residues 44–82 (SLTSRSHTQEEMVQPNNISPNTYVENGHTPIPQPTTEKL) is disordered. Residues 57 to 67 (QPNNISPNTYV) show a composition bias toward polar residues.

It belongs to the ZipA family. As to quaternary structure, interacts with FtsZ via their C-terminal domains.

The protein localises to the cell inner membrane. Its function is as follows. Essential cell division protein that stabilizes the FtsZ protofilaments by cross-linking them and that serves as a cytoplasmic membrane anchor for the Z ring. Also required for the recruitment to the septal ring of downstream cell division proteins. The polypeptide is Cell division protein ZipA (Haemophilus influenzae (strain ATCC 51907 / DSM 11121 / KW20 / Rd)).